Reading from the N-terminus, the 265-residue chain is Expansin-like A2 (265 aa).

An N-terminal signal peptide occupies residues 1-21 (MLQGFLFLLSVVLLFSSSAAA). Residues 42–148 (SGACAYGSMA…RRVPCDYGNK (107 aa)) form the Expansin-like EG45 domain. N100 and N103 each carry an N-linked (GlcNAc...) asparagine glycan. One can recognise an Expansin-like CBD domain in the interval 162-244 (NYLAIKLLYQ…NWEAGKSYDA (83 aa)).

It belongs to the expansin family. Expansin-like A subfamily.

The protein localises to the secreted. The chain is Expansin-like A2 (EXLA2) from Arabidopsis thaliana (Mouse-ear cress).